The primary structure comprises 465 residues: ATP synthase subunit beta (465 aa).

152–159 (GGAGVGKT) contributes to the ATP binding site.

Belongs to the ATPase alpha/beta chains family. F-type ATPases have 2 components, CF(1) - the catalytic core - and CF(0) - the membrane proton channel. CF(1) has five subunits: alpha(3), beta(3), gamma(1), delta(1), epsilon(1). CF(0) has three main subunits: a(1), b(2) and c(9-12). The alpha and beta chains form an alternating ring which encloses part of the gamma chain. CF(1) is attached to CF(0) by a central stalk formed by the gamma and epsilon chains, while a peripheral stalk is formed by the delta and b chains.

It is found in the cell inner membrane. It catalyses the reaction ATP + H2O + 4 H(+)(in) = ADP + phosphate + 5 H(+)(out). In terms of biological role, produces ATP from ADP in the presence of a proton gradient across the membrane. The catalytic sites are hosted primarily by the beta subunits. The polypeptide is ATP synthase subunit beta (Campylobacter hominis (strain ATCC BAA-381 / DSM 21671 / CCUG 45161 / LMG 19568 / NCTC 13146 / CH001A)).